The following is a 32-amino-acid chain: Cyclotide Hyfl-B (32 aa).

Positions 1 to 32 form a cross-link, cyclopeptide (Gly-Asn); sequence GSPIQCAETCFIGKCYTEELGCTCTAFLCMKN. 3 disulfides stabilise this stretch: Cys6–Cys22, Cys10–Cys24, and Cys15–Cys29.

Belongs to the cyclotide family. Moebius subfamily. This is a cyclic peptide.

Functionally, probably participates in a plant defense mechanism. The polypeptide is Cyclotide Hyfl-B (Hybanthus floribundus (Greenviolet)).